We begin with the raw amino-acid sequence, 1693 residues long: uncharacterized protein (1693 aa).

WD repeat units lie at residues 1008 to 1042, 1053 to 1083, 1094 to 1124, 1135 to 1165, 1176 to 1206, 1217 to 1247, 1258 to 1288, 1299 to 1329, 1340 to 1370, 1381 to 1411, 1422 to 1452, 1463 to 1493, 1504 to 1534, 1545 to 1575, 1586 to 1616, and 1627 to 1657; these read HHEG…YLWS, GHQE…KLWQ, GHED…RIWN, GHAD…RLWD, GHTS…RLWD, GHQN…RVWS, GHDH…RLWT, GHQK…RQWD, GHSH…RLWT, DHQG…QLWN, GHQD…RVWN, HYEK…GIWE, GHEG…RIWD, GHQS…RLWD, GHQG…RLWD, and GHGN…KLWP.

This is an uncharacterized protein from Synechocystis sp. (strain ATCC 27184 / PCC 6803 / Kazusa).